We begin with the raw amino-acid sequence, 1377 residues long: DNA-directed RNA polymerase subunit beta (1377 aa).

The protein belongs to the RNA polymerase beta chain family. The RNAP catalytic core consists of 2 alpha, 1 beta, 1 beta' and 1 omega subunit. When a sigma factor is associated with the core the holoenzyme is formed, which can initiate transcription.

It catalyses the reaction RNA(n) + a ribonucleoside 5'-triphosphate = RNA(n+1) + diphosphate. Its function is as follows. DNA-dependent RNA polymerase catalyzes the transcription of DNA into RNA using the four ribonucleoside triphosphates as substrates. The polypeptide is DNA-directed RNA polymerase subunit beta (Brucella canis (strain ATCC 23365 / NCTC 10854 / RM-666)).